We begin with the raw amino-acid sequence, 216 residues long: Chaperone protein TorD (216 aa).

The protein belongs to the TorD/DmsD family. TorD subfamily.

Its subcellular location is the cytoplasm. Its function is as follows. Involved in the biogenesis of TorA. Acts on TorA before the insertion of the molybdenum cofactor and, as a result, probably favors a conformation of the apoenzyme that is competent for acquiring the cofactor. The polypeptide is Chaperone protein TorD (Ferrimonas balearica (strain DSM 9799 / CCM 4581 / KCTC 23876 / PAT)).